Reading from the N-terminus, the 228-residue chain is Latherin (228 aa).

The N-terminal stretch at 1–20 (MLKVSCLFVLLCGLLVPSSA) is a signal peptide. The cysteines at positions 153 and 196 are disulfide-linked.

The protein belongs to the BPI/LBP/Plunc superfamily. Plunc family. Monomer. In terms of processing, no sign of N-X-[ST] acceptor site even though reported as N-glycosylated. In terms of tissue distribution, found in sweat (at protein level).

It localises to the secreted. Major protein in sweat, has surfactant properties. Has a role in temperature regulation by having a capacity to make hydrophobic surfaces wettable and so can function in promoting spreading and evaporation of sweat. This chain is Latherin (LATH), found in Equus caballus (Horse).